A 210-amino-acid chain; its full sequence is Sortase A (210 aa).

The Cytoplasmic portion of the chain corresponds to 1–5 (MNKQR). A helical transmembrane segment spans residues 6-26 (IYSIVAILLFVVGGVLIGKPF). Residues 27 to 210 (YDGYQAEKKQ…GDLVGTKAKK (184 aa)) are Extracellular-facing. The active-site Proton donor/acceptor is the His-126. Catalysis depends on Cys-187, which acts as the Acyl-thioester intermediate.

It belongs to the bacterial sortase family. Class A subfamily.

It localises to the cell membrane. Inhibited by thiol-reactive reagents. Its function is as follows. Transpeptidase that anchors surface proteins to the cell wall. Recognizes and modifies its substrate by proteolytic cleavage of a C-terminal sorting signal. Following cleavage, a covalent intermediate is formed via a thioester bond between the sortase and its substrate, which is then transferred and covalently attached to the cell wall. This sortase recognizes a Leu-Pro-x-Thr-Gly (LPXTG) motif, which is cleaved by the sortase between the threonine and glycine residues. Important for growth in macrophages. May be critical in the early stages of inhalation anthrax. The protein is Sortase A of Bacillus anthracis.